The following is an 892-amino-acid chain: MKSQEITKRWVDFFVNKGHTAVPSASLVSSDPSLLFTVAGMVPFIPYLTAREEPPYSRATSVQKCIRTGDIEEVGKTARHGTFFQMCGNFSFGDYFKEDAIKFAFELLTTSVDDGGYGLPAERLWVTVYEEDDEAKELWLKNTGIPAERIQRMGKADNYWSTGQPGPAGPCSEIYYDRGPAYGIEGGPLADETRYIEIWNLVFMQYQIENVRSKVDFDIVGELPQKNIDTGLGMERLAMILQGVENMYETDQVRPVIDKAAELSGREYTSAESPEDPHHTDDVRMRVVGDHIRSALMLIADGVAPSNEGRGYVLRRLIRRAVRAMRLLGVEKACLPDLLPASRDAMKGVYPVVETDFARISRIAYAEEKAFLRTIASGTARLEDAVAESKAAGVPLSGADAFALHDTYGFPIDLTLEMAEEAGLQVDEAGFRALMLEQRQRAQADAKGKKGGHADLSAYQELLGKGETVFTGYDELEGEAKVRGIVSGGRAVAHASTGDEIELVLNETPFYAEAGGQSADTGLITGDGFVVEVLDVQRPIKGLSVHKAIVREGEIGSDALVRAAVDRERRHAAEQAHTGTHIVHAALHQILGPEATQRGSYNKAGYLRFDFAWGEGLSTATRSEIEEVSNIAIRNNFRVDTKVMGLAEAKALGAMALFGENYGSEVRVVEIDGAWSRELCGGTHVSNTSLIGSLSLLGEQSVGSGNRRVEAFVGLDAFRHLAAERALVSELTELLKVPSGQLADRISSTLNKLKATEKELDRLRKEQLAAAAANLVGTAKDAAGVRVVAHDAGQVGGADDLRNLALDLRNRLGSEASTVAVAGVSNDRPVILIATNEAAREAGVKAGALVRLAAGILGGGGGGKDDVAQGGGTDAGKVSEALTAVVDAIAKR.

Zn(2+)-binding residues include His577, His581, Cys680, and His684.

It belongs to the class-II aminoacyl-tRNA synthetase family. The cofactor is Zn(2+).

It is found in the cytoplasm. It carries out the reaction tRNA(Ala) + L-alanine + ATP = L-alanyl-tRNA(Ala) + AMP + diphosphate. Its function is as follows. Catalyzes the attachment of alanine to tRNA(Ala) in a two-step reaction: alanine is first activated by ATP to form Ala-AMP and then transferred to the acceptor end of tRNA(Ala). Also edits incorrectly charged Ser-tRNA(Ala) and Gly-tRNA(Ala) via its editing domain. In Paenarthrobacter aurescens (strain TC1), this protein is Alanine--tRNA ligase.